A 251-amino-acid polypeptide reads, in one-letter code: MAMGVPRVILLCLFGAALCLTGSQALQCYSFEHTYFGPFDLRAMKLPSISCPHECFEAILSLDTGYRAPVTLVRKGCWTGPPAGQTQSNADALPPDYSVVRGCTTDKCNAHLMTHDALPNLSQAPDPPTLSGAECYACIGVHQDDCAIGRSRRVQCHQDQTACFQGNGRMTVGNFSVPVYIRTCHRPSCTTEGTTSPWTAIDLQGSCCEGYLCNRKSMTQPFTSASATTPPRALQVLALLLPVLLLVGLSA.

A signal peptide spans 1 to 25 (MAMGVPRVILLCLFGAALCLTGSQA). Residues asparagine 120 and asparagine 174 are each glycosylated (N-linked (GlcNAc...) asparagine). A UPAR/Ly6 domain is found at 135–214 (CYACIGVHQD…GSCCEGYLCN (80 aa)). Alanine 225 is lipidated: GPI-anchor amidated alanine. Residues 226 to 251 (SATTPPRALQVLALLLPVLLLVGLSA) constitute a propeptide, removed in mature form.

It localises to the cell membrane. The sequence is that of Ly6/PLAUR domain-containing protein 5 (LYPD5) from Homo sapiens (Human).